A 189-amino-acid polypeptide reads, in one-letter code: Peptidyl-tRNA hydrolase (189 aa).

Tyr-15 contacts tRNA. His-20 serves as the catalytic Proton acceptor. TRNA-binding residues include Phe-66, Asn-68, and Asn-114.

It belongs to the PTH family. As to quaternary structure, monomer.

It is found in the cytoplasm. The catalysed reaction is an N-acyl-L-alpha-aminoacyl-tRNA + H2O = an N-acyl-L-amino acid + a tRNA + H(+). Functionally, hydrolyzes ribosome-free peptidyl-tRNAs (with 1 or more amino acids incorporated), which drop off the ribosome during protein synthesis, or as a result of ribosome stalling. Its function is as follows. Catalyzes the release of premature peptidyl moieties from peptidyl-tRNA molecules trapped in stalled 50S ribosomal subunits, and thus maintains levels of free tRNAs and 50S ribosomes. The chain is Peptidyl-tRNA hydrolase from Dichelobacter nodosus (strain VCS1703A).